The chain runs to 415 residues: Calreticulin (415 aa).

Residues 1 to 20 (MANPKSLSLFLLSLLAIASA) form the signal peptide. N-linked (GlcNAc...) asparagine glycosylation occurs at asparagine 52. Residues cysteine 106 and cysteine 138 are joined by a disulfide bond. An alpha-D-glucoside contacts are provided by tyrosine 110, lysine 112, tyrosine 129, and aspartate 136. Residue asparagine 152 is glycosylated (N-linked (GlcNAc...) asparagine). A run of 7 repeats spans residues 192 to 203 (KQTGSLYTDWDL), 211 to 222 (DPEAKKPEDWDE), 228 to 239 (DPEDKKPEGYDD), 246 to 257 (DPDAKKPEDWDD), 261 to 271 (GEWTAPTIANP), 275 to 285 (GPWKPKKIKNP), and 289 to 299 (GKWKAPMIDNP). The segment at 192 to 257 (KQTGSLYTDW…DAKKPEDWDD (66 aa)) is 4 X approximate repeats. The span at 208–253 (KIKDPEAKKPEDWDEKEYIPDPEDKKPEGYDDIPKEIPDPDAKKPE) shows a compositional bias: basic and acidic residues. Positions 208-276 (KIKDPEAKKP…TIANPEYKGP (69 aa)) are disordered. The interval 261–299 (GEWTAPTIANPEYKGPWKPKKIKNPNYKGKWKAPMIDNP) is 3 X approximate repeats. Residue glutamate 319 coordinates an alpha-D-glucoside. Residues 347–376 (ETWGKNKDAEKAAFEEAEKKKEEEESKDDP) are compositionally biased toward basic and acidic residues. The disordered stretch occupies residues 347–415 (ETWGKNKDAE…DSAEDVHDEL (69 aa)). Composition is skewed to acidic residues over residues 377 to 397 (ADSDADEDDDDADDTEGEDDG) and 404 to 415 (AEDSAEDVHDEL). Residues 412–415 (HDEL) carry the Prevents secretion from ER motif.

This sequence belongs to the calreticulin family.

It localises to the endoplasmic reticulum lumen. In terms of biological role, molecular calcium-binding chaperone promoting folding, oligomeric assembly and quality control in the ER via the calreticulin/calnexin cycle. This lectin may interact transiently with almost all of the monoglucosylated glycoproteins that are synthesized in the ER. The chain is Calreticulin from Ricinus communis (Castor bean).